The chain runs to 226 residues: Large ribosomal subunit protein uL3 (226 aa).

Over residues 135–150 (MSSQRASHGNSRSHNV) the composition is skewed to polar residues. The interval 135–158 (MSSQRASHGNSRSHNVPGSIGMAQ) is disordered. An N5-methylglutamine modification is found at Gln-158.

The protein belongs to the universal ribosomal protein uL3 family. Part of the 50S ribosomal subunit. Forms a cluster with proteins L14 and L19. Methylated by PrmB.

In terms of biological role, one of the primary rRNA binding proteins, it binds directly near the 3'-end of the 23S rRNA, where it nucleates assembly of the 50S subunit. In Variovorax paradoxus (strain S110), this protein is Large ribosomal subunit protein uL3.